Consider the following 350-residue polypeptide: ALA-interacting subunit 5 (350 aa).

The interval 1–23 (MSSTAASSTVGGGGSSEISGVKK) is disordered. The residue at position 2 (S2) is an N-acetylserine. The helical transmembrane segment at 50–70 (VILTFLVAGVVFIPLGVICLF) threads the bilayer. N-linked (GlcNAc...) asparagine glycosylation is found at N181 and N231. The chain crosses the membrane as a helical span at residues 304–324 (FLGIAYLTVGSICLFLAVTFA).

The protein belongs to the CDC50/LEM3 family. Interacts with ALA2 and ALA3 in a heterologous system. In terms of tissue distribution, expressed in roots, leaves, stems, flowers and siliques.

It is found in the golgi apparatus membrane. The protein resides in the prevacuolar compartment membrane. It localises to the endoplasmic reticulum membrane. Its function is as follows. Required for the lipid transport activity of the ALA/ALIS P4-ATPase complex. This chain is ALA-interacting subunit 5 (ALIS5), found in Arabidopsis thaliana (Mouse-ear cress).